The primary structure comprises 246 residues: Acetoacetyl-CoA reductase (246 aa).

NADP(+) is bound by residues 12-14 (GGI) and 88-92 (CAGIT). Residues aspartate 94 and 147 to 150 (QFGQ) contribute to the substrate site. Tyrosine 153 (proton acceptor) is an active-site residue. An NADP(+)-binding site is contributed by 183 to 186 (PGYV). 184 to 185 (GY) provides a ligand contact to substrate.

It belongs to the short-chain dehydrogenases/reductases (SDR) family.

It is found in the cytoplasm. The enzyme catalyses a (3R)-3-hydroxyacyl-CoA + NADP(+) = a 3-oxoacyl-CoA + NADPH + H(+). It functions in the pathway biopolymer metabolism; poly-(R)-3-hydroxybutanoate biosynthesis. The chain is Acetoacetyl-CoA reductase from Allochromatium vinosum (strain ATCC 17899 / DSM 180 / NBRC 103801 / NCIMB 10441 / D) (Chromatium vinosum).